Reading from the N-terminus, the 257-residue chain is Imidazole glycerol phosphate synthase subunit HisF (257 aa).

Active-site residues include Asp11 and Asp130.

The protein belongs to the HisA/HisF family. In terms of assembly, heterodimer of HisH and HisF.

The protein localises to the cytoplasm. The enzyme catalyses 5-[(5-phospho-1-deoxy-D-ribulos-1-ylimino)methylamino]-1-(5-phospho-beta-D-ribosyl)imidazole-4-carboxamide + L-glutamine = D-erythro-1-(imidazol-4-yl)glycerol 3-phosphate + 5-amino-1-(5-phospho-beta-D-ribosyl)imidazole-4-carboxamide + L-glutamate + H(+). Its pathway is amino-acid biosynthesis; L-histidine biosynthesis; L-histidine from 5-phospho-alpha-D-ribose 1-diphosphate: step 5/9. IGPS catalyzes the conversion of PRFAR and glutamine to IGP, AICAR and glutamate. The HisF subunit catalyzes the cyclization activity that produces IGP and AICAR from PRFAR using the ammonia provided by the HisH subunit. This chain is Imidazole glycerol phosphate synthase subunit HisF, found in Shewanella sediminis (strain HAW-EB3).